Here is a 156-residue protein sequence, read N- to C-terminus: Endoribonuclease YbeY (156 aa).

Zn(2+) contacts are provided by His-105, His-109, and Asp-115.

This sequence belongs to the endoribonuclease YbeY family. Zn(2+) serves as cofactor.

It is found in the cytoplasm. In terms of biological role, single strand-specific metallo-endoribonuclease involved in late-stage 70S ribosome quality control and in maturation of the 3' terminus of the 16S rRNA. The chain is Endoribonuclease YbeY from Chlorobium chlorochromatii (strain CaD3).